Here is a 60-residue protein sequence, read N- to C-terminus: Pepsin-3 (60 aa).

The propeptide at 1–35 (INVPLTRHKSMRESLREKGIELPYQDPAIKYRPEF) is activation peptide.

Belongs to the peptidase A1 family.

This is Pepsin-3 from Thunnus orientalis (North Pacific bluefin tuna).